The sequence spans 695 residues: A-kinase anchor protein 17A (695 aa).

Positions 83–112 are PKA-RI and PKA-RII subunit binding domain; it reads VENKSLVKSFLACLDGKTIKLSGFSDILKV. Lys-118 is covalently cross-linked (Glycyl lysine isopeptide (Lys-Gly) (interchain with G-Cter in SUMO1); alternate). Lys-118 is covalently cross-linked (Glycyl lysine isopeptide (Lys-Gly) (interchain with G-Cter in SUMO2); alternate). Positions 147-256 constitute an RRM domain; that stretch reads DTIHLEGLPC…KAVACNIKVS (110 aa). Residues 279-337 form a disordered region; the sequence is QELEQQREEQKRREKEAEERQRAEERKQKELEELERERKREEKLRKREQKQRDRELRRN. Residues 425–454 form a PKA-RI-alpha subunit binding domain region; that stretch reads LGLQRKERELRERLLSILLSKKPDDSHTHD. The disordered stretch occupies residues 482 to 695; sequence TTLHPLGGQP…PSRHRSTWNR (214 aa). Position 537 is a phosphoserine (Ser-537). A compositionally biased stretch (basic and acidic residues) spans 567–585; it reads VSRKDTRSEQDKCNREPSK. 2 stretches are compositionally biased toward basic residues: residues 598-609 and 618-628; these read RHKRERSRARRA and RKERRPHKKHA. Residues 629-644 show a composition bias toward basic and acidic residues; sequence YKDDSPRRRSTSPDHT. Position 633 is a phosphoserine (Ser-633). Basic residues-rich tracts occupy residues 645–658 and 666–695; these read RSRRSHSKDRHRRE and SASRKHSRHRRRSERSRSRSPSRHRSTWNR.

Monomer. Component of the spliceosome. Interacts with ZRANB2 and SFRS1/ASF through its Arg/Ser-rich domain. Interacts with RI and RII subunits of PKA. As to expression, widely expressed. Found in heart, brain, lung, liver, skeletal muscle, kidney and pancreas. Expressed in activated B-cells and placenta. Expressed in all cell lines tested including Jurkat-TAg, U-937 and HEK293 cells.

The protein localises to the nucleus speckle. Functionally, splice factor regulating alternative splice site selection for certain mRNA precursors. Mediates regulation of pre-mRNA splicing in a PKA-dependent manner. This chain is A-kinase anchor protein 17A (AKAP17A), found in Homo sapiens (Human).